A 473-amino-acid chain; its full sequence is FAD-dependent monooxygenase ctvC (473 aa).

FAD is bound by residues glutamate 37, alanine 51, and arginine 110. A helical transmembrane segment spans residues isoleucine 218–leucine 238. FAD contacts are provided by aspartate 310 and alanine 323. Asparagine 358 is a glycosylation site (N-linked (GlcNAc...) asparagine). The chain crosses the membrane as a helical span at residues leucine 451 to asparagine 471.

Belongs to the paxM FAD-dependent monooxygenase family. FAD serves as cofactor.

The protein resides in the membrane. Its pathway is mycotoxin biosynthesis. FAD-dependent monooxygenase; part of the gene cluster that mediates the biosynthesis of citreoviridin, an inhibitor of the of F1-ATPase beta-subunit. The HR-PKS ctvA accepts acetyl-CoA as the starter unit and catalyzes eight iterations of malonyl-CoA extension and four iterations of SAM-dependent methylation at C4, C12, C14, and C16. The KR and DH domains selectively act on the first six iterations to generate the hexaene chain. In the last three iterations, the KR and DH domains terminate their functions to yield a beta,delta-diketo ester moiety, which then undergoes intramolecular cyclization to yield an alpha-pyrone intermediate. Subsequently, ctvB methylates the alpha-pyrone hydroxyl group to generate citreomontanin. In order to form the tetrahydrofuran ring with the correct stereochemistry, the terminal alkenes of citreomontanin need to undergo isomerization to yield a (17Z)-hexaene, a step that could be catalyzed by ctvC. The (17Z)-hexaene then undergoes bisepoxidation by ctvC to form a (17R,16R,15S,14R)-bisepoxide moiety. Lastly, ctvD acts as a regioselective hydrolase to form the tetrahydrofuran ring with the substituents in the correct absolute configuration, completing the biosynthesis of citreoviridin. This is FAD-dependent monooxygenase ctvC from Aspergillus terreus (strain NIH 2624 / FGSC A1156).